The sequence spans 490 residues: Ketol-acid reductoisomerase (NADP(+)) (490 aa).

Residues 16–207 (INKCRFMKKE…GGHRAGVLES (192 aa)) form the KARI N-terminal Rossmann domain. NADP(+)-binding positions include 44 to 47 (CGAQ), K67, S77, and 107 to 109 (DKQ). H131 is a catalytic residue. G157 provides a ligand contact to NADP(+). KARI C-terminal knotted domains follow at residues 208–343 (SFIA…TAPV) and 344–483 (YNEK…MKKM). Positions 216, 220, 388, and 392 each coordinate Mg(2+). Substrate is bound at residue S413.

Belongs to the ketol-acid reductoisomerase family. Mg(2+) is required as a cofactor.

It carries out the reaction (2R)-2,3-dihydroxy-3-methylbutanoate + NADP(+) = (2S)-2-acetolactate + NADPH + H(+). It catalyses the reaction (2R,3R)-2,3-dihydroxy-3-methylpentanoate + NADP(+) = (S)-2-ethyl-2-hydroxy-3-oxobutanoate + NADPH + H(+). It participates in amino-acid biosynthesis; L-isoleucine biosynthesis; L-isoleucine from 2-oxobutanoate: step 2/4. It functions in the pathway amino-acid biosynthesis; L-valine biosynthesis; L-valine from pyruvate: step 2/4. In terms of biological role, involved in the biosynthesis of branched-chain amino acids (BCAA). Catalyzes an alkyl-migration followed by a ketol-acid reduction of (S)-2-acetolactate (S2AL) to yield (R)-2,3-dihydroxy-isovalerate. In the isomerase reaction, S2AL is rearranged via a Mg-dependent methyl migration to produce 3-hydroxy-3-methyl-2-ketobutyrate (HMKB). In the reductase reaction, this 2-ketoacid undergoes a metal-dependent reduction by NADPH to yield (R)-2,3-dihydroxy-isovalerate. The protein is Ketol-acid reductoisomerase (NADP(+)) of Buchnera aphidicola subsp. Acyrthosiphon pisum (strain 5A).